A 234-amino-acid polypeptide reads, in one-letter code: Segregation and condensation protein A (234 aa).

It belongs to the ScpA family. In terms of assembly, component of a cohesin-like complex composed of ScpA, ScpB and the Smc homodimer, in which ScpA and ScpB bind to the head domain of Smc. The presence of the three proteins is required for the association of the complex with DNA.

The protein resides in the cytoplasm. In terms of biological role, participates in chromosomal partition during cell division. May act via the formation of a condensin-like complex containing Smc and ScpB that pull DNA away from mid-cell into both cell halves. This is Segregation and condensation protein A from Streptococcus pyogenes serotype M12 (strain MGAS2096).